Here is a 1098-residue protein sequence, read N- to C-terminus: Gramicidin S synthase 1 (1098 aa).

A Carrier domain is found at 538-612; it reads APRNEIEETL…QLVHYIKDSK (75 aa). O-(pantetheine 4'-phosphoryl)serine is present on serine 573.

Belongs to the ATP-dependent AMP-binding enzyme family. In terms of assembly, large multienzyme complex of GrsA and GrsB. It depends on pantetheine 4'-phosphate as a cofactor.

The enzyme catalyses L-phenylalanine + ATP + H2O = D-phenylalanine + AMP + diphosphate + H(+). It participates in antibiotic biosynthesis; gramicidin S biosynthesis. In terms of biological role, in the first step of peptide synthesis this enzyme activates phenylalanine and racemizes it to the D-isomer. The sequence is that of Gramicidin S synthase 1 (grsA) from Brevibacillus brevis (Bacillus brevis).